Here is a 466-residue protein sequence, read N- to C-terminus: D-inositol 3-phosphate glycosyltransferase (466 aa).

Positions 1-12 (MRPMRAGAGAAG) are enriched in low complexity. The tract at residues 1-22 (MRPMRAGAGAAGESCKDDGVRP) is disordered. His-43 lines the 1D-myo-inositol 3-phosphate pocket. UDP-N-acetyl-alpha-D-glucosamine contacts are provided by residues 49–50 (QP) and Gly-57. 1D-myo-inositol 3-phosphate-binding positions include 54-59 (DAGGMN), Lys-112, Tyr-145, Thr-169, and Arg-189. Positions 263, 268, and 321 each coordinate UDP-N-acetyl-alpha-D-glucosamine. 3 residues coordinate Mg(2+): Phe-330, His-331, and Val-333. UDP-N-acetyl-alpha-D-glucosamine is bound by residues Glu-343 and Glu-351. Thr-357 is a Mg(2+) binding site. The tract at residues 446–466 (VRDPVAARKPRRWTARRGVGA) is disordered.

The protein belongs to the glycosyltransferase group 1 family. MshA subfamily. As to quaternary structure, homodimer.

It carries out the reaction 1D-myo-inositol 3-phosphate + UDP-N-acetyl-alpha-D-glucosamine = 1D-myo-inositol 2-acetamido-2-deoxy-alpha-D-glucopyranoside 3-phosphate + UDP + H(+). Functionally, catalyzes the transfer of a N-acetyl-glucosamine moiety to 1D-myo-inositol 3-phosphate to produce 1D-myo-inositol 2-acetamido-2-deoxy-glucopyranoside 3-phosphate in the mycothiol biosynthesis pathway. In Mycobacterium marinum (strain ATCC BAA-535 / M), this protein is D-inositol 3-phosphate glycosyltransferase.